Here is a 136-residue protein sequence, read N- to C-terminus: Endonuclease II (136 aa).

Positions 32 to 131 (KYNVIYAIAI…IKLFNPPWNI (100 aa)) constitute a GIY-YIG domain.

As to quaternary structure, homotetramer. Mg(2+) serves as cofactor.

It carries out the reaction Endonucleolytic nicking and cleavage of cytosine-containing double-stranded DNA.. In terms of biological role, contributes to the degradation of host DNA, permitting the scavenging of host-derived nucleotides for phage DNA synthesis. Sequence-specific endonuclease. Catalyzes nicking of the bottom strand of double-stranded DNA between the first and second base pair to the right of a top-strand CCGC motif. Does not cleave native phage DNA, which contains 5-hydroxymethylcytosine instead of cytosine. This chain is Endonuclease II (denA), found in Escherichia coli (Bacteriophage T4).